A 202-amino-acid polypeptide reads, in one-letter code: Imidazoleglycerol-phosphate dehydratase (202 aa).

It belongs to the imidazoleglycerol-phosphate dehydratase family.

It is found in the cytoplasm. It catalyses the reaction D-erythro-1-(imidazol-4-yl)glycerol 3-phosphate = 3-(imidazol-4-yl)-2-oxopropyl phosphate + H2O. It participates in amino-acid biosynthesis; L-histidine biosynthesis; L-histidine from 5-phospho-alpha-D-ribose 1-diphosphate: step 6/9. This chain is Imidazoleglycerol-phosphate dehydratase, found in Rhizobium johnstonii (strain DSM 114642 / LMG 32736 / 3841) (Rhizobium leguminosarum bv. viciae).